The chain runs to 850 residues: Receptor-like protein kinase ANXUR1 (850 aa).

The signal sequence occupies residues M1–G26. The Extracellular portion of the chain corresponds to Q27–H429. N-linked (GlcNAc...) asparagine glycosylation is found at N114, N132, N292, N302, and N330. A helical transmembrane segment spans residues A430–T450. Over A451–R850 the chain is Cytoplasmic. Residues F517–A790 form the Protein kinase domain. Residues I523–V531 and K545 each bind ATP. D641 serves as the catalytic Proton acceptor. The tract at residues T796–R850 is disordered. A compositionally biased stretch (polar residues) spans E839–R850.

The protein belongs to the protein kinase superfamily. Ser/Thr protein kinase family. Expressed in pollen, but not in pistils or seedlings.

It localises to the cell membrane. The enzyme catalyses L-seryl-[protein] + ATP = O-phospho-L-seryl-[protein] + ADP + H(+). It carries out the reaction L-threonyl-[protein] + ATP = O-phospho-L-threonyl-[protein] + ADP + H(+). Receptor-like protein kinase that controls pollen tube behavior by directing rupture at proper timing to release the sperm cell. This Arabidopsis thaliana (Mouse-ear cress) protein is Receptor-like protein kinase ANXUR1 (ANX1).